A 391-amino-acid chain; its full sequence is 3-ketoacyl-CoA thiolase (391 aa).

Cysteine 95 (acyl-thioester intermediate) is an active-site residue. Catalysis depends on proton acceptor residues histidine 347 and cysteine 377.

Belongs to the thiolase-like superfamily. Thiolase family. Heterotetramer of two alpha chains (FadB) and two beta chains (FadA).

Its subcellular location is the cytoplasm. The catalysed reaction is an acyl-CoA + acetyl-CoA = a 3-oxoacyl-CoA + CoA. It functions in the pathway lipid metabolism; fatty acid beta-oxidation. Catalyzes the final step of fatty acid oxidation in which acetyl-CoA is released and the CoA ester of a fatty acid two carbons shorter is formed. This is 3-ketoacyl-CoA thiolase from Alcanivorax borkumensis (strain ATCC 700651 / DSM 11573 / NCIMB 13689 / SK2).